Consider the following 93-residue polypeptide: Small ribosomal subunit protein bS20 (93 aa).

The segment at 72–93 (KNTASRKKSRLTRKFNSVYKAS) is disordered. Residues 74 to 84 (TASRKKSRLTR) are compositionally biased toward basic residues.

Belongs to the bacterial ribosomal protein bS20 family.

Its function is as follows. Binds directly to 16S ribosomal RNA. The chain is Small ribosomal subunit protein bS20 from Carboxydothermus hydrogenoformans (strain ATCC BAA-161 / DSM 6008 / Z-2901).